The following is a 300-amino-acid chain: N-acetylmuramic acid 6-phosphate etherase (300 aa).

The 163-residue stretch at I55–K217 folds into the SIS domain. E83 functions as the Proton donor in the catalytic mechanism. E114 is a catalytic residue.

The protein belongs to the GCKR-like family. MurNAc-6-P etherase subfamily. As to quaternary structure, homodimer.

The enzyme catalyses N-acetyl-D-muramate 6-phosphate + H2O = N-acetyl-D-glucosamine 6-phosphate + (R)-lactate. It participates in amino-sugar metabolism; N-acetylmuramate degradation. Specifically catalyzes the cleavage of the D-lactyl ether substituent of MurNAc 6-phosphate, producing GlcNAc 6-phosphate and D-lactate. This Symbiobacterium thermophilum (strain DSM 24528 / JCM 14929 / IAM 14863 / T) protein is N-acetylmuramic acid 6-phosphate etherase.